Consider the following 1035-residue polypeptide: Protein hir-1 (1035 aa).

WD repeat units follow at residues 15 to 54, 68 to 107, 129 to 168, 171 to 210, 232 to 275, 299 to 338, and 342 to 383; these read QKDF…NSHD, HHLG…PSHT, GHDN…KLKT, VHQS…PNAT, PLTT…SEIN, DENS…PVLI, and IASK…WVAK. The interval 393–479 is disordered; that stretch reads KYGGSRKGMG…PEEESADKTA (87 aa). Residues 408–425 are compositionally biased toward basic and acidic residues; it reads DGLHLENHSKEKELRGAE.

The protein belongs to the WD repeat HIR1 family.

The protein localises to the nucleus. In terms of biological role, required for replication-independent chromatin assembly and for the periodic repression of histone gene transcription during the cell cycle. The chain is Protein hir-1 (hir-1) from Neurospora crassa (strain ATCC 24698 / 74-OR23-1A / CBS 708.71 / DSM 1257 / FGSC 987).